The following is a 674-amino-acid chain: MLRGDSAAKIQERYAELQKRKSHPTSCISTAFTNVAALCRKRYQMMHPELGLAHSCNEAFLPLMAFCGRHRDYNSPEESQRELLFHERLKSALDELTFRPCSEEQRASYQKLDALTELYRDPQFQQINNFMTDFKKWLDGGFSTAVEGDAKAIRLEPFQKNLLIHVIFFIAVTKIPVLANRVLQYLIHAFQIDFLSQTSIDIFKQKATVFLVPRRHGKTWFIIPIISFLLKHMIGISIGYVAHQKHVSQFVLKEVEFRCRHTFARDYVVENKDNVISIDHRGAKSTALFASCYNTNSIRGQNFHLLLVDEAHFIKKEAFNTILGFLAQNTTKIIFISSTNTTSDATCFLTRLNNAPFDMLNVVSYVCEEHLHSFTEKGDATACPCYRLHKPTFISLNSQVRKTANMFMPGAFMDEIIGGTNKISQNTVLITDQSREEFDILRYSTLNTNAYDYFGKTLYVYLDPAFTTNRKASGTGVAAVGAYRHQFLIYGLEHFFLRDLSESSEVAIAECAAHMIISVLSLHPYLDELRIAVEGNTNQAAAVRIACLIRQSVQSSTLIRVLFYHTPDQNHIEQPFYLMGRDKALAVEQFISRFNSGYIKASQELVSYTIKLSHDPIEYLLEQIQNLHRVTLAEGTTARYSAKRQNRISDDLIIAVIMATYLCDDIHAIRFRVS.

The Walker A motif motif lies at 212-219 (VPRRHGKT). Residues 305 to 310 (LLLVDE) carry the Walker B motif motif. Catalysis depends on glutamate 310, which acts as the For ATPase activity. Catalysis depends on for nuclease activity residues aspartate 463, glutamate 534, and aspartate 651.

Belongs to the herpesviridae TRM3 protein family. Interacts with the terminase subunits TRM1 and TRM2. Interacts with portal protein.

It is found in the host nucleus. In terms of biological role, component of the molecular motor that translocates viral genomic DNA in empty capsid during DNA packaging. Forms a tripartite terminase complex together with TRM1 and TRM2 in the host cytoplasm. Once the complex reaches the host nucleus, it interacts with the capsid portal vertex. This portal forms a ring in which genomic DNA is translocated into the capsid. TRM3 carries an RNase H-like nuclease activity that plays an important role for the cleavage of concatemeric viral DNA into unit length genomes. This is Tripartite terminase subunit 3 from Homo sapiens (Human).